The primary structure comprises 149 residues: Probable calcium-binding protein CML25/26 (149 aa).

EF-hand domains lie at 1–35 (MASS…ALGE), 37–72 (VSEE…HQLQ), 77–113 (ESLR…LGSE), and 117–149 (LEME…MLMA). Ca(2+) contacts are provided by D13, D15, D17, K19, E24, D50, D52, D54, and E61. Ca(2+)-binding residues include D130, N132, D134, and E141.

Potential calcium sensor. In Oryza sativa subsp. japonica (Rice), this protein is Probable calcium-binding protein CML25/26 (CML25).